The following is an 85-amino-acid chain: MTSERALTLAPGKVSTADIYEADFSFRREFVRQILQREFILFEISMYIIFIVTFCYKIILFLFRIIPKDLDHRQRNRGRKMSASA.

A helical membrane pass occupies residues 39–59; that stretch reads FILFEISMYIIFIVTFCYKII.

It localises to the host membrane. This is an uncharacterized protein from Gallid herpesvirus 2 (strain Chicken/Md5/ATCC VR-987) (GaHV-2).